We begin with the raw amino-acid sequence, 217 residues long: Superoxide dismutase [Mn], mitochondrial (217 aa).

The transit peptide at 1–17 directs the protein to the mitochondrion; sequence MFVARKISPNCKPGVRG. Residues histidine 43, histidine 91, aspartate 175, and histidine 179 each coordinate Mn(2+).

Belongs to the iron/manganese superoxide dismutase family. Homotetramer. It depends on Mn(2+) as a cofactor.

It is found in the mitochondrion matrix. The enzyme catalyses 2 superoxide + 2 H(+) = H2O2 + O2. Functionally, destroys superoxide anion radicals which are normally produced within the cells and which are toxic to biological systems. In Drosophila melanogaster (Fruit fly), this protein is Superoxide dismutase [Mn], mitochondrial (Sod2).